Here is a 111-residue protein sequence, read N- to C-terminus: Putative pterin-4-alpha-carbinolamine dehydratase (111 aa).

This sequence belongs to the pterin-4-alpha-carbinolamine dehydratase family.

It catalyses the reaction (4aS,6R)-4a-hydroxy-L-erythro-5,6,7,8-tetrahydrobiopterin = (6R)-L-erythro-6,7-dihydrobiopterin + H2O. The chain is Putative pterin-4-alpha-carbinolamine dehydratase from Chlorobaculum tepidum (strain ATCC 49652 / DSM 12025 / NBRC 103806 / TLS) (Chlorobium tepidum).